The sequence spans 201 residues: Small ribosomal subunit protein uS4c (201 aa).

The S4 RNA-binding domain maps to 89–152 (MRLDNILFRL…NSRTLVQNLI (64 aa)).

This sequence belongs to the universal ribosomal protein uS4 family. As to quaternary structure, part of the 30S ribosomal subunit. Contacts protein S5. The interaction surface between S4 and S5 is involved in control of translational fidelity.

It is found in the plastid. The protein localises to the chloroplast. Functionally, one of the primary rRNA binding proteins, it binds directly to 16S rRNA where it nucleates assembly of the body of the 30S subunit. Its function is as follows. With S5 and S12 plays an important role in translational accuracy. This chain is Small ribosomal subunit protein uS4c (rps4), found in Crucihimalaya wallichii (Rock-cress).